We begin with the raw amino-acid sequence, 158 residues long: C-type lectin (158 aa).

The first 23 residues, 1–23 (MGHFTFISLCLMPIFLSLSGAEC), serve as a signal peptide directing secretion. 4 disulfide bridges follow: cysteine 26/cysteine 37, cysteine 54/cysteine 154, cysteine 61/cysteine 156, and cysteine 129/cysteine 146. The 123-residue stretch at 33–155 (RNGLCYKLFD…CESLFAFICR (123 aa)) folds into the C-type lectin domain. Asparagine 111 and asparagine 121 each carry an N-linked (GlcNAc...) asparagine glycan. Positions 119–121 (EPN) match the Mannose-binding motif. The Ca(2+) site is built by glutamate 127, asparagine 142, and aspartate 143.

Belongs to the true venom lectin family. As to quaternary structure, homodimer; non-covalently linked. As to expression, expressed by the venom gland.

It localises to the secreted. Functionally, mannose-binding lectin which recognizes specific carbohydrate structures and agglutinates a variety of animal cells by binding to cell-surface glycoproteins and glycolipids. May be a calcium-dependent lectin. This Micrurus corallinus (Brazilian coral snake) protein is C-type lectin.